A 585-amino-acid polypeptide reads, in one-letter code: DNA ligase (585 aa).

Glu278 lines the ATP pocket. Residue Lys280 is the N6-AMP-lysine intermediate of the active site. ATP is bound by residues Arg285, Arg301, Glu330, Phe370, Arg444, and Lys450.

Belongs to the ATP-dependent DNA ligase family. Mg(2+) serves as cofactor.

The catalysed reaction is ATP + (deoxyribonucleotide)n-3'-hydroxyl + 5'-phospho-(deoxyribonucleotide)m = (deoxyribonucleotide)n+m + AMP + diphosphate.. Functionally, DNA ligase that seals nicks in double-stranded DNA during DNA replication, DNA recombination and DNA repair. The chain is DNA ligase from Haloferax volcanii (strain ATCC 29605 / DSM 3757 / JCM 8879 / NBRC 14742 / NCIMB 2012 / VKM B-1768 / DS2) (Halobacterium volcanii).